A 352-amino-acid chain; its full sequence is UPF0324 membrane protein BCE_5279 (352 aa).

10 helical membrane-spanning segments follow: residues 25-47 (FGFSQGIGITLLIAIVAKYLAEL), 52-71 (IMGQLVIAILIGMVWRAAIG), 111-130 (VLVIAAVVITFTIFVVYGLT), 140-162 (GILTACGTAICGAAAVVAIAPQV), 169-191 (TAVGAAIIAILGTIFTLIYTLLY), 201-223 (YGVFSGATLHEIAHVIAAAAPGG), 230-252 (AVIVKLTRVAMLVPVAILIGLWF), 267-289 (LPIPWFIFGFLAMSAVHSLGIIP), 291-313 (VVAGYIVVIAYMLIAMAMAGLGL), and 328-350 (FVAGLIGSVCLSVLGYVLVYALG).

Belongs to the UPF0324 family.

It localises to the cell membrane. This Bacillus cereus (strain ATCC 10987 / NRS 248) protein is UPF0324 membrane protein BCE_5279.